The primary structure comprises 379 residues: Stimulator of interferon genes protein (379 aa).

At 1–23 the chain is on the cytoplasmic side; sequence MPQDPSTRSSPARLLIPEPRAGR. Residues 24–40 form a helical membrane-spanning segment; that stretch reads ARHAACVLLAVCFVVLF. Topologically, residues 41–50 are lumenal; the sequence is LSGEPLAPII. The chain crosses the membrane as a helical span at residues 51-75; that stretch reads RSVCTQLAALQLGVLLKGCCCLAEE. The Cytoplasmic segment spans residues 76-97; sequence IFHLHSRHHGSLWQVLCSCFPP. The chain crosses the membrane as a helical span at residues 98 to 111; it reads RWYLALLLVGGSAY. Residues 112–121 lie on the Lumenal side of the membrane; the sequence is LDPPEDNGHS. The helical transmembrane segment at 122–139 threads the bilayer; that stretch reads PRLALTLSCLCQLLVLAL. Residues 140-379 are Cytoplasmic-facing; the sequence is GLQKLSAVEV…LPQPLRSDCP (240 aa). The segment at 158–345 is cyclic dinucleotide-binding domain (CBD); sequence KNVAHGLAWS…WHLQQQQREE (188 aa). 3',3'-c-di-GMP is bound by residues Ser167, Tyr172, 243–246, and Ser268; that span reads RVYK. 2',3'-cGAMP contacts are provided by residues 167–172, 243–246, and Ser268; these read SYYIGY and RVYK. Positions 363-366 match the pLxIS motif motif; it reads LQVS. Ser366 is subject to Phosphoserine; by TBK1.

This sequence belongs to the STING family. As to quaternary structure, homodimer; forms a homodimer in absence of cyclic nucleotide (c-di-GMP or cGAMP). Homotetramer; in presence of cyclic nucleotide (c-di-GMP or cGAMP), forms tetramers and higher-order oligomers through side-by-side packing. Interacts (when phosphorylated) with IRF3; following activation and phosphorylation on the pLxIS motif by TBK1, recruits IRF3. In terms of processing, phosphorylation by TBK1 leads to activation and production of IFN-beta. Following cyclic nucleotide (c-di-GMP or cGAMP)-binding, activation and translocation from the endoplasmic reticulum, STING1 is phosphorylated by TBK1 at Ser-366 in the pLxIS motif. The phosphorylated pLxIS motif constitutes an IRF3-binding motif, leading to recruitment of the transcription factor IRF3 to induce type-I interferons and other cytokines.

The protein localises to the endoplasmic reticulum membrane. It localises to the cytoplasm. The protein resides in the perinuclear region. Its subcellular location is the endoplasmic reticulum-Golgi intermediate compartment membrane. It is found in the golgi apparatus membrane. The protein localises to the cytoplasmic vesicle. It localises to the autophagosome membrane. The enzyme catalyses H(+)(in) = H(+)(out). Functionally, facilitator of innate immune signaling that acts as a sensor of cytosolic DNA from bacteria and viruses and promotes the production of type I interferon (IFN-alpha and IFN-beta). Innate immune response is triggered in response to non-CpG double-stranded DNA from viruses and bacteria delivered to the cytoplasm. Acts by binding cyclic dinucleotides: recognizes and binds cyclic di-GMP (c-di-GMP), a second messenger produced by bacteria, and cyclic GMP-AMP (cGAMP), a messenger produced by CGAS in response to DNA virus in the cytosol. Upon binding of c-di-GMP or cGAMP, STING1 oligomerizes and is able to activate both NF-kappa-B and IRF3 transcription pathways to induce expression of type I interferon and exert a potent anti-viral state. Exhibits 2',3' phosphodiester linkage-specific ligand recognition: can bind both 2'-3' linked cGAMP and 3'-3' linked cGAMP but is preferentially activated by 2'-3' linked cGAMP. In addition to promote the production of type I interferons, plays a direct role in autophagy. Following cGAMP-binding, STING1 buds from the endoplasmic reticulum into COPII vesicles, which then form the endoplasmic reticulum-Golgi intermediate compartment (ERGIC). The ERGIC serves as the membrane source for LC3 lipidation, leading to formation of autophagosomes that target cytosolic DNA or DNA viruses for degradation by the lysosome. Promotes autophagy by acting as a proton channel that directs proton efflux from the Golgi to facilitate LC3 lipidation. The autophagy- and interferon-inducing activities can be uncoupled and autophagy induction is independent of TBK1 phosphorylation. This is Stimulator of interferon genes protein from Gallus gallus (Chicken).